The primary structure comprises 164 residues: Transcription elongation factor GreA (164 aa).

Positions 15–76 (DRLKNELDQL…LQELLNSAKV (62 aa)) form a coiled coil.

It belongs to the GreA/GreB family.

Necessary for efficient RNA polymerase transcription elongation past template-encoded arresting sites. The arresting sites in DNA have the property of trapping a certain fraction of elongating RNA polymerases that pass through, resulting in locked ternary complexes. Cleavage of the nascent transcript by cleavage factors such as GreA or GreB allows the resumption of elongation from the new 3'terminus. GreA releases sequences of 2 to 3 nucleotides. This chain is Transcription elongation factor GreA, found in Rhodococcus erythropolis (strain PR4 / NBRC 100887).